We begin with the raw amino-acid sequence, 429 residues long: Glutamate-1-semialdehyde 2,1-aminomutase 2 (429 aa).

Lys268 bears the N6-(pyridoxal phosphate)lysine mark.

Belongs to the class-III pyridoxal-phosphate-dependent aminotransferase family. HemL subfamily. As to quaternary structure, homodimer. Pyridoxal 5'-phosphate serves as cofactor.

The protein localises to the cytoplasm. The catalysed reaction is (S)-4-amino-5-oxopentanoate = 5-aminolevulinate. The protein operates within porphyrin-containing compound metabolism; protoporphyrin-IX biosynthesis; 5-aminolevulinate from L-glutamyl-tRNA(Glu): step 2/2. This chain is Glutamate-1-semialdehyde 2,1-aminomutase 2, found in Staphylococcus aureus (strain MSSA476).